We begin with the raw amino-acid sequence, 509 residues long: Aspartyl/glutamyl-tRNA(Asn/Gln) amidotransferase subunit B (509 aa).

Belongs to the GatB/GatE family. GatB subfamily. As to quaternary structure, heterotrimer of A, B and C subunits.

The catalysed reaction is L-glutamyl-tRNA(Gln) + L-glutamine + ATP + H2O = L-glutaminyl-tRNA(Gln) + L-glutamate + ADP + phosphate + H(+). The enzyme catalyses L-aspartyl-tRNA(Asn) + L-glutamine + ATP + H2O = L-asparaginyl-tRNA(Asn) + L-glutamate + ADP + phosphate + 2 H(+). Its function is as follows. Allows the formation of correctly charged Asn-tRNA(Asn) or Gln-tRNA(Gln) through the transamidation of misacylated Asp-tRNA(Asn) or Glu-tRNA(Gln) in organisms which lack either or both of asparaginyl-tRNA or glutaminyl-tRNA synthetases. The reaction takes place in the presence of glutamine and ATP through an activated phospho-Asp-tRNA(Asn) or phospho-Glu-tRNA(Gln). The polypeptide is Aspartyl/glutamyl-tRNA(Asn/Gln) amidotransferase subunit B (Psychrobacter cryohalolentis (strain ATCC BAA-1226 / DSM 17306 / VKM B-2378 / K5)).